The following is a 218-amino-acid chain: uncharacterized protein (218 aa).

Residues 11–31 form a helical membrane-spanning segment; it reads AAGLFPLALMLSGCISYALVS.

The protein resides in the membrane. This is an uncharacterized protein from Escherichia coli (strain K12).